We begin with the raw amino-acid sequence, 91 residues long: UPF0213 protein NGO_1598 (91 aa).

The 80-residue stretch at 4-83 (SNWSVYLILC…AAQKRQLWEQ (80 aa)) folds into the GIY-YIG domain.

The protein belongs to the UPF0213 family.

The sequence is that of UPF0213 protein NGO_1598 from Neisseria gonorrhoeae (strain ATCC 700825 / FA 1090).